Here is a 262-residue protein sequence, read N- to C-terminus: 2-aminoethylphosphonate dioxygenase (262 aa).

2-oxoglutarate is bound at residue Lys-108. His-118, Asp-120, and His-198 together coordinate Fe cation.

This sequence belongs to the PhyH family. Fe(2+) serves as cofactor.

The catalysed reaction is (2-aminoethyl)phosphonate + 2-oxoglutarate + O2 = (1R)-(2-amino-1-hydroxyethyl)phosphonate + succinate + CO2. Its activity is regulated as follows. Activity is enhanced by ascorbate. In terms of biological role, involved in the degradation of the organophosphonate 2-aminoethylphosphonic acid (2-AEP). Catalyzes the hydroxylation of 2-aminoethylphosphonic acid to yield (2-amino-1-hydroxyethyl)phosphonic acid. The protein is 2-aminoethylphosphonate dioxygenase of Uncultured bacterium HF130_AEPn_1.